A 270-amino-acid chain; its full sequence is MSFSQLFPKYNSSFNPLRGSAIQCSVIQLQQNKVLVDTGLKTPIICFQHELKRVPITKQARFHFGIEDVEVFGEPKMLLPKPLEIKCKRKLVWIELTKIWRSDQNLVKGFILNSVKGGYAVAIAGYIAFLPKSLLRSRKVFYSQWRIFSILNMKPKISNIVVKEIGDGKIDYFSPTKSHQKQTKYLGAKLKHWRNMKKNTNVKKKYIFSEKVPTTKKTKQGFKHLGPKPLAYTEKKRETTKQSTKNNVFQLKDQGQGKSLVFVDVLTQSS.

The segment at 218–250 is disordered; the sequence is TKQGFKHLGPKPLAYTEKKRETTKQSTKNNVFQ.

Belongs to the bacterial ribosomal protein bS1 family.

It localises to the mitochondrion. The sequence is that of Small ribosomal subunit protein bS1m (RPS1) from Marchantia polymorpha (Common liverwort).